A 463-amino-acid polypeptide reads, in one-letter code: Interstitial collagenase B (463 aa).

A signal peptide spans 1–17; sequence MPSLPLLLRLWAASSYS. Positions 18–96 are cleaved as a propeptide — activation peptide; that stretch reads FPVIQDGLQK…PRCGVPDVAP (79 aa). The Cysteine switch signature appears at 87 to 94; it reads PRCGVPDV. Zn(2+) is bound at residue Cys-89. The segment at 95 to 273 is metalloprotease; that stretch reads APYAITHNNP…PIQLTDATLD (179 aa). Asp-155 provides a ligand contact to Ca(2+). Positions 165 and 167 each coordinate Zn(2+). Asp-172 and Gly-173 together coordinate Ca(2+). A Zn(2+)-binding site is contributed by His-180. 2 residues coordinate Ca(2+): Gly-187 and Gly-189. A Zn(2+)-binding site is contributed by His-193. Residue Asp-195 participates in Ca(2+) binding. Residue His-215 coordinates Zn(2+). Glu-216 is a catalytic residue. Residues His-219 and His-225 each contribute to the Zn(2+) site. Cys-275 and Cys-463 are oxidised to a cystine. 2 Hemopexin repeats span residues 278–321 and 322–368; these read GLTF…WPNL and PGKF…FGFP. Position 282 (Asp-282) interacts with Ca(2+). Residue Asn-370 is glycosylated (N-linked (GlcNAc...) asparagine). 2 Hemopexin repeats span residues 371–419 and 420–463; these read VTNI…FPGI and DYKV…WFNC. Asp-375 and Asp-424 together coordinate Ca(2+).

The protein belongs to the peptidase M10A family. Requires Ca(2+) as cofactor. Zn(2+) is required as a cofactor.

It is found in the secreted. The protein resides in the extracellular space. It localises to the extracellular matrix. The catalysed reaction is Cleavage of the triple helix of collagen at about three-quarters of the length of the molecule from the N-terminus, at 775-Gly-|-Ile-776 in the alpha1(I) chain. Cleaves synthetic substrates and alpha-macroglobulins at bonds where P1' is a hydrophobic residue.. Can be activated without removal of the activation peptide. The protein is Interstitial collagenase B (Mmp1b) of Mus musculus (Mouse).